Reading from the N-terminus, the 1127-residue chain is Glutamate receptor-interacting protein 1 (1127 aa).

Q11 is lipidated: S-palmitoyl cysteine. The residue at position 43 (S43) is a Phosphoserine. PDZ domains lie at 53–136, 150–238, 252–336, 471–560, 572–657, and 672–754; these read VVEL…EYEL, TVEV…EYDV, LVEV…LPHH, EVVL…EFDV, HVKL…RKDE, and TVEL…KKQT. 3 disordered regions span residues 752 to 802, 840 to 865, and 942 to 980; these read KQTD…PSVD, KQRT…SNED, and MARS…GRKS. Composition is skewed to polar residues over residues 840-856 and 947-973; these read KQRT…SQTY and LGRQ…NTLP. Residues 1003-1085 enclose the PDZ 7 domain; it reads KVTLYKDSGM…KLDLVISRNP (83 aa). The segment at 1108–1127 is disordered; sequence FFQQPSHGGNLETREPTNTL.

As to quaternary structure, interacts with EFNB3, GRIA2, GRIA3, GRIPAP1/GRASP1, PPFIA1, PPFIA4, FRAS1, PTPRF, liprins-alpha and the C-terminal tail of PRLHR. Can form homomultimers or heteromultimers with GRIP2. Interacts with EFNB1, EPHA7, EPHB2, KIF5A, KIF5B and KIF5C. Forms a ternary complex with GRIA2 and CSPG4. Interacts with ATAD1 in an ATP-dependent manner. ATAD1-catalyzed ATP hydrolysis disrupts binding to ATAD1 and to GRIA2 and leads to AMPAR complex disassembly. Interacts with SLC30A9 and PLCD4. Interacts with BUD23. Forms a complex with NSG1, GRIA2 and STX12; controls the intracellular fate of AMPAR and the endosomal sorting of the GRIA2 subunit toward recycling and membrane targeting. Interacts with NSG1. Palmitoylation of isoform 2. As to expression, expressed in brain. Isoform 2 is the major isoform in brain. Expressed in oligodendrocyte lineage cells.

It localises to the membrane. It is found in the cytoplasmic vesicle. The protein localises to the perikaryon. The protein resides in the cell projection. Its subcellular location is the dendrite. It localises to the cytoplasm. It is found in the endomembrane system. The protein localises to the postsynaptic cell membrane. The protein resides in the postsynaptic density. Its subcellular location is the endoplasmic reticulum membrane. Its function is as follows. May play a role as a localized scaffold for the assembly of a multiprotein signaling complex and as mediator of the trafficking of its binding partners at specific subcellular location in neurons. Through complex formation with NSG1, GRIA2 and STX12 controls the intracellular fate of AMPAR and the endosomal sorting of the GRIA2 subunit toward recycling and membrane targeting. This Mus musculus (Mouse) protein is Glutamate receptor-interacting protein 1 (Grip1).